We begin with the raw amino-acid sequence, 172 residues long: 3-hydroxydecanoyl-[acyl-carrier-protein] dehydratase (172 aa).

Residue His71 is part of the active site.

The protein belongs to the thioester dehydratase family. FabA subfamily. As to quaternary structure, homodimer.

Its subcellular location is the cytoplasm. The catalysed reaction is a (3R)-hydroxyacyl-[ACP] = a (2E)-enoyl-[ACP] + H2O. It catalyses the reaction (3R)-hydroxydecanoyl-[ACP] = (2E)-decenoyl-[ACP] + H2O. It carries out the reaction (2E)-decenoyl-[ACP] = (3Z)-decenoyl-[ACP]. The protein operates within lipid metabolism; fatty acid biosynthesis. Its function is as follows. Necessary for the introduction of cis unsaturation into fatty acids. Catalyzes the dehydration of (3R)-3-hydroxydecanoyl-ACP to E-(2)-decenoyl-ACP and then its isomerization to Z-(3)-decenoyl-ACP. Can catalyze the dehydratase reaction for beta-hydroxyacyl-ACPs with saturated chain lengths up to 16:0, being most active on intermediate chain length. The sequence is that of 3-hydroxydecanoyl-[acyl-carrier-protein] dehydratase from Pectobacterium carotovorum subsp. carotovorum (strain PC1).